The chain runs to 322 residues: Ribosomal RNA small subunit methyltransferase H (322 aa).

Residues 35 to 37 (GGY), Asp-52, Phe-79, Asp-100, and Gln-107 contribute to the S-adenosyl-L-methionine site. The tract at residues 254–322 (GATPAGSRHL…TAPKKEGRQG (69 aa)) is disordered. Residues 295 to 309 (SRSATLRVARRTAAA) show a composition bias toward low complexity.

It belongs to the methyltransferase superfamily. RsmH family.

It is found in the cytoplasm. It catalyses the reaction cytidine(1402) in 16S rRNA + S-adenosyl-L-methionine = N(4)-methylcytidine(1402) in 16S rRNA + S-adenosyl-L-homocysteine + H(+). Its function is as follows. Specifically methylates the N4 position of cytidine in position 1402 (C1402) of 16S rRNA. The polypeptide is Ribosomal RNA small subunit methyltransferase H (Rhizorhabdus wittichii (strain DSM 6014 / CCUG 31198 / JCM 15750 / NBRC 105917 / EY 4224 / RW1) (Sphingomonas wittichii)).